The primary structure comprises 1560 residues: BRD4-interacting chromatin-remodeling complex-associated protein (1560 aa).

Disordered regions lie at residues 53–99, 624–688, 723–949, 974–1028, 1049–1075, and 1215–1300; these read VQEA…GADQ, APQA…ATPT, IVSA…VTTP, NKAG…TGLP, KAAS…KPPT, and SSEG…IKTY. Residues 86–96 show a composition bias toward gly residues; it reads ATGGGGGGSGG. A compositionally biased stretch (low complexity) spans 624-664; the sequence is APQAPPAVSTPLPLGLQQPQAQQPPQAPTPQAAAPPQATTP. Residues 726–736 show a composition bias toward pro residues; it reads APPPAQDPAPA. Low complexity predominate over residues 747 to 780; that stretch reads PQAPDSQASPAPAPQIPAAAPLKGPGPSSSPSLP. Pro residues-rich tracts occupy residues 791–806, 814–831, and 843–880; these read LPSP…PPSR, PSEP…PPTL, and VPPP…PHLP. Positions 881 to 896 are enriched in low complexity; that stretch reads PSSTSSAVASSSETSS. At Ser-919 the chain carries Phosphoserine. Thr-921 carries the phosphothreonine modification. Positions 932-941 are enriched in pro residues; that stretch reads PAAPPPPPPR. Positions 1005–1028 are enriched in low complexity; that stretch reads APSGTPTAPSHAPAPAPMAATGLP. Lys-1057 carries the post-translational modification N6-acetyllysine. A compositionally biased stretch (polar residues) spans 1227 to 1236; the sequence is LSSSAPGAST. The segment covering 1264 to 1281 has biased composition (low complexity); sequence ASSSLSSSSSSSSAASSL. Lys-1313 participates in a covalent cross-link: Glycyl lysine isopeptide (Lys-Gly) (interchain with G-Cter in SUMO2). Disordered stretches follow at residues 1324 to 1424 and 1440 to 1560; these read NTAL…VDEA and YQRM…TLTR. Residues 1331-1356 show a composition bias toward pro residues; sequence HQPPPPPATLKVAEPPPRPPPPPPPT. Residues 1401-1412 are compositionally biased toward low complexity; that stretch reads PEGTPAGRARGG. At Ser-1413 the chain carries Phosphoserine. Positions 1485–1515 are enriched in polar residues; the sequence is ASFSSDSPQDDTLTEHLQSAIDSILNLQQAP.

As to quaternary structure, component of the multiprotein chromatin-remodeling complexes SWI/SNF: SWI/SNF-A (BAF), SWI/SNF-B (PBAF) and related complexes. The canonical complex contains a catalytic subunit (either SMARCA4/BRG1/BAF190A or SMARCA2/BRM/BAF190B) and at least SMARCE1, ACTL6A/BAF53, SMARCC1/BAF155, SMARCC2/BAF170, and SMARCB1/SNF5/BAF47. Other subunits specific to each of the complexes may also be present permitting several possible combinations developmentally and tissue specific. Component of the SWI/SNF (GBAF) subcomplex, which includes at least BICRA or BICRAL (mutually exclusive), BRD9, SS18, the core BAF subunits, SMARCA2/BRM, SMARCA4/BRG1/BAF190A, ACTL6A/BAF53, SMARCC1/BAF155, and SMARCD1/BAF60A. Interacts with BRD4; the interaction bridges BRD4 to the GBAF complex. In terms of tissue distribution, expressed at moderate levels in heart, brain, placenta, skeletal muscle, and pancreas, and at lower levels in lung, liver and kidney.

The protein localises to the nucleus. Functionally, component of SWI/SNF chromatin remodeling subcomplex GBAF that carries out key enzymatic activities, changing chromatin structure by altering DNA-histone contacts within a nucleosome in an ATP-dependent manner. May play a role in BRD4-mediated gene transcription. The polypeptide is BRD4-interacting chromatin-remodeling complex-associated protein (Homo sapiens (Human)).